Consider the following 1493-residue polypeptide: Protein Shroom4 (1493 aa).

The PDZ domain maps to 10-92; sequence YVPVQLQGGA…ILKLIVRRRN (83 aa). Residues 202-282 form a disordered region; that stretch reads CALSLRPEEP…PPQPPVRRDS (81 aa). Polar residues-rich tracts occupy residues 234 to 243 and 249 to 262; these read AETSGGSRRT and TPSSQMSSRPQEGY. Ser-411 is subject to Phosphoserine. A disordered region spans residues 430-695; sequence GSKGMELPPV…SPGQRPGQSS (266 aa). Basic and acidic residues-rich tracts occupy residues 470-484 and 498-509; these read QSSKERKTRQVDDRS and GEADGHPSEKGF. A compositionally biased stretch (polar residues) spans 513 to 547; sequence NRTSRAASELANQQPSASGSLVQQATDCSSTTKAA. Phosphoserine is present on Ser-729. 2 disordered regions span residues 740–759 and 781–813; these read AAMEGPSNPGDNKELKASTA and SKSLSTSHLPGLTTHSNKTFTQRPKPIDQNFQP. A compositionally biased stretch (polar residues) spans 782-802; the sequence is KSLSTSHLPGLTTHSNKTFTQ. Ser-1019 is modified (phosphoserine). 4 disordered regions span residues 1117 to 1170, 1187 to 1206, 1214 to 1236, and 1246 to 1265; these read AAQQ…ETSG, SFGHLEGSRQGSQSVPAEQE, DFLPPIRGHLGSQPEQAQPPCYY, and GQEATESAKQEFQHFSPPSG. Positions 1118 to 1129 are enriched in low complexity; sequence AQQQKQQQQQQK. Residues 1132-1159 are compositionally biased toward acidic residues; sequence EEEEEEEEEEEEEEEEEEEEAEEEEEEL. Positions 1213–1492 constitute an ASD2 domain; sequence SDFLPPIRGH…RESLLLGPSN (280 aa). A coiled-coil region spans residues 1382–1488; the sequence is LSGRLARVEN…LKCLRESLLL (107 aa).

It belongs to the shroom family. As to quaternary structure, interacts directly with F-actin. In terms of tissue distribution, expressed in all fetal and adult tissues investigated. Expressed in adult heart, brain, placenta, lung, liver, skeletal muscle, kidney and pancreas. In brain regions detected in cerebellum, cerebral cortex, medulla, spinal cord, occipital pole, frontal lobe, temporal lobe and putamen. The expression is strongest in the medulla and weakest in the cerebral cortex.

It localises to the cytoplasm. It is found in the cytoskeleton. Its function is as follows. Probable regulator of cytoskeletal architecture that plays an important role in development. May regulate cellular and cytoskeletal architecture by modulating the spatial distribution of myosin II. The polypeptide is Protein Shroom4 (SHROOM4) (Homo sapiens (Human)).